Reading from the N-terminus, the 324-residue chain is Spheroidene monooxygenase (324 aa).

The interval 226–324 (GKDPVGEALT…PGKGGRKENA (99 aa)) is disordered. 2 stretches are compositionally biased toward low complexity: residues 248–278 (PAAA…VEMP) and 287–313 (VVEA…NFKG).

This sequence belongs to the CrtA family. It depends on heme as a cofactor.

The catalysed reaction is spheroidene + 4 reduced [2Fe-2S]-[ferredoxin] + 2 O2 + 4 H(+) = spheroiden-2-one + 4 oxidized [2Fe-2S]-[ferredoxin] + 3 H2O. It carries out the reaction spheroidene + 2 reduced [2Fe-2S]-[ferredoxin] + O2 + 2 H(+) = 2-hydroxyspheroidene + 2 oxidized [2Fe-2S]-[ferredoxin] + H2O. It catalyses the reaction 2-hydroxyspheroidene + 2 reduced [2Fe-2S]-[ferredoxin] + O2 + 2 H(+) = 2,2-dihydroxyspheroidene + 2 oxidized [2Fe-2S]-[ferredoxin] + H2O. The enzyme catalyses 2,2-dihydroxyspheroidene = spheroiden-2-one + H2O. It participates in carotenoid biosynthesis; spheroidene biosynthesis. In terms of biological role, involved in the biosynthesis of the carotenoid spheroidene. Catalyzes the introduction of one keto group at the C-2 position of spheroidene. In vitro, can use nonnative substrates and produce oxocarotenoids with a hydroxy and/or a keto group, derived from neurosporene, lycopene, 3,4-didehydrolycopene or 3,4,3',4'-tetradehydrolycopene. This is Spheroidene monooxygenase from Cereibacter sphaeroides (strain ATCC 17023 / DSM 158 / JCM 6121 / CCUG 31486 / LMG 2827 / NBRC 12203 / NCIMB 8253 / ATH 2.4.1.) (Rhodobacter sphaeroides).